Consider the following 327-residue polypeptide: Movement protein (327 aa).

Residues Ser297–Glu327 are a coiled coil.

It belongs to the caulimoviridae movement protein family. Homotrimer, through the coiled-coil domain. Interacts with VAP. May interact (via N-terminus) with host prenylated Rab acceptor protein 1D (PRA1D).

The protein localises to the host cell junction. It localises to the host plasmodesma. In terms of biological role, transports viral genome to neighboring plant cells directly through plasmosdesmata, without any budding. The movement protein allows efficient cell to cell propagation, by bypassing the host cell wall barrier. Acts by forming tubules structures that increase the size exclusion limit (SEL) of plasmodesmata, thereby allowing viral ribonucleocapsids to spread directly to neighboring cells. This Cauliflower mosaic virus (strain Strasbourg) (CaMV) protein is Movement protein.